A 523-amino-acid polypeptide reads, in one-letter code: MIEWTILSSLASALLAGGGTYLVYKKVSNANYKIHLEKAKARARAIEHEAEMILQEAKIRAKELEIGAKSKYENETSKVIKEYESYLIKLEKQEAKNQQRLERETQQLEEERRRINHKQASLSGMIEELEKLKGDYRSKLTESLEILSRVAGLTQEEAKELALAKATEESRAQIAQIVRKYESEAKEEGRKRANYILAQATTRFAGEFAAERLINVVNLPNDELKGRIIGKEGRNIKTLEMLSGVDVIIDDTPGAIVLSSFNLYRRAIATRTIEALVEDGRIQPARIEEVYKKVEQEFEEKVLEEGEGIVLDMELGYVHPELKKLIGRLKYRASYGQNALGHSLEVANLAGVIAGELGGDVKLAKRAGLLHDIGKALTHDFGGSHVDLGAEVCSRYKEHPVVINAIFAHHGHEEAKSIESAAVCAADALSAARPGARREVLESFLKRVQEIEKIAMEKLGVRQAYAINAGREVRVIVNADLINDEESVLLAQEIAKEIETKVQYPGEIKVSVIREVRAVEFAK.

A helical membrane pass occupies residues 7 to 24 (LSSLASALLAGGGTYLVY). Positions 213-279 (LINVVNLPND…TRTIEALVED (67 aa)) constitute a KH domain. The region spanning 339–432 (ALGHSLEVAN…VCAADALSAA (94 aa)) is the HD domain.

The protein belongs to the RNase Y family.

It is found in the cell membrane. In terms of biological role, endoribonuclease that initiates mRNA decay. This chain is Ribonuclease Y, found in Wolinella succinogenes (strain ATCC 29543 / DSM 1740 / CCUG 13145 / JCM 31913 / LMG 7466 / NCTC 11488 / FDC 602W) (Vibrio succinogenes).